The chain runs to 239 residues: MRYTVITLFPNLVRPWLEESLLKKALERGLIQVEVVDLRAFGLGRHRTVDDTPYGGGAGMVIRPDVAVAALERALPADEVVLLSPAGRPFTQKVAEELAGKEHLVLLAGRYEGFDARVEAFATRILSIGDYVLMGGEVAALAVLEATARLVPGVIGDPQSHREDSFVRGLLDYPQYTRPPEFRGLRVPEVLLSGHHQEVERWRRQEALRRTLALRPELVARAPLSLLEARLLAEMDREE.

S-adenosyl-L-methionine is bound by residues G109 and 128 to 133 (IGDYVL).

It belongs to the RNA methyltransferase TrmD family. In terms of assembly, homodimer.

It is found in the cytoplasm. It catalyses the reaction guanosine(37) in tRNA + S-adenosyl-L-methionine = N(1)-methylguanosine(37) in tRNA + S-adenosyl-L-homocysteine + H(+). Its function is as follows. Specifically methylates guanosine-37 in various tRNAs. In Thermus thermophilus (strain ATCC BAA-163 / DSM 7039 / HB27), this protein is tRNA (guanine-N(1)-)-methyltransferase.